The following is a 210-amino-acid chain: Riboflavin kinase (210 aa).

A compositionally biased stretch (pro residues) spans 1 to 11 (MRPSNPRPPVT). The segment at 1-24 (MRPSNPRPPVTGPDSGPEAPFPIR) is disordered. Mg(2+) contacts are provided by T44 and N46. E113 acts as the Nucleophile in catalysis.

This sequence belongs to the flavokinase family. The cofactor is Zn(2+). Mg(2+) serves as cofactor.

It catalyses the reaction riboflavin + ATP = FMN + ADP + H(+). Its pathway is cofactor biosynthesis; FMN biosynthesis; FMN from riboflavin (ATP route): step 1/1. Its function is as follows. Catalyzes the phosphorylation of riboflavin (vitamin B2) to form flavin mononucleotide (FMN) coenzyme. The polypeptide is Riboflavin kinase (fmn1) (Emericella nidulans (strain FGSC A4 / ATCC 38163 / CBS 112.46 / NRRL 194 / M139) (Aspergillus nidulans)).